The following is a 50-amino-acid chain: uncharacterized protein (50 aa).

It localises to the mitochondrion. This is an uncharacterized protein from Saccharomyces cerevisiae (strain ATCC 204508 / S288c) (Baker's yeast).